Reading from the N-terminus, the 98-residue chain is NADH-ubiquinone oxidoreductase chain 4L (98 aa).

The next 3 helical transmembrane spans lie at 1–21 (MIPT…GMLT), 27–47 (VASL…TTLI), and 61–81 (IILL…LISI).

It belongs to the complex I subunit 4L family. As to quaternary structure, core subunit of respiratory chain NADH dehydrogenase (Complex I) which is composed of 45 different subunits.

The protein localises to the mitochondrion inner membrane. It carries out the reaction a ubiquinone + NADH + 5 H(+)(in) = a ubiquinol + NAD(+) + 4 H(+)(out). Its function is as follows. Core subunit of the mitochondrial membrane respiratory chain NADH dehydrogenase (Complex I) which catalyzes electron transfer from NADH through the respiratory chain, using ubiquinone as an electron acceptor. Part of the enzyme membrane arm which is embedded in the lipid bilayer and involved in proton translocation. In Macaca nigra (Celebes black macaque), this protein is NADH-ubiquinone oxidoreductase chain 4L (MT-ND4L).